Here is a 146-residue protein sequence, read N- to C-terminus: 3-hydroxyacyl-[acyl-carrier-protein] dehydratase FabZ (146 aa).

Residue histidine 49 is part of the active site.

It belongs to the thioester dehydratase family. FabZ subfamily.

The protein localises to the cytoplasm. It carries out the reaction a (3R)-hydroxyacyl-[ACP] = a (2E)-enoyl-[ACP] + H2O. Its function is as follows. Involved in unsaturated fatty acids biosynthesis. Catalyzes the dehydration of short chain beta-hydroxyacyl-ACPs and long chain saturated and unsaturated beta-hydroxyacyl-ACPs. The protein is 3-hydroxyacyl-[acyl-carrier-protein] dehydratase FabZ of Pseudomonas savastanoi pv. phaseolicola (strain 1448A / Race 6) (Pseudomonas syringae pv. phaseolicola (strain 1448A / Race 6)).